Reading from the N-terminus, the 208-residue chain is Imidazoleglycerol-phosphate dehydratase (208 aa).

The interval 1–20 (MSRRATVKAPRAGAAARRGA) is disordered. The span at 7 to 19 (VKAPRAGAAARRG) shows a compositional bias: low complexity.

This sequence belongs to the imidazoleglycerol-phosphate dehydratase family.

It localises to the cytoplasm. The catalysed reaction is D-erythro-1-(imidazol-4-yl)glycerol 3-phosphate = 3-(imidazol-4-yl)-2-oxopropyl phosphate + H2O. It functions in the pathway amino-acid biosynthesis; L-histidine biosynthesis; L-histidine from 5-phospho-alpha-D-ribose 1-diphosphate: step 6/9. This Anaeromyxobacter sp. (strain K) protein is Imidazoleglycerol-phosphate dehydratase.